The sequence spans 123 residues: UPF0102 protein SPO0400 (123 aa).

Belongs to the UPF0102 family.

The protein is UPF0102 protein SPO0400 of Ruegeria pomeroyi (strain ATCC 700808 / DSM 15171 / DSS-3) (Silicibacter pomeroyi).